The following is a 396-amino-acid chain: Tryptophan synthase beta chain (396 aa).

K88 carries the post-translational modification N6-(pyridoxal phosphate)lysine.

Belongs to the TrpB family. As to quaternary structure, tetramer of two alpha and two beta chains. Pyridoxal 5'-phosphate is required as a cofactor.

It carries out the reaction (1S,2R)-1-C-(indol-3-yl)glycerol 3-phosphate + L-serine = D-glyceraldehyde 3-phosphate + L-tryptophan + H2O. The protein operates within amino-acid biosynthesis; L-tryptophan biosynthesis; L-tryptophan from chorismate: step 5/5. Functionally, the beta subunit is responsible for the synthesis of L-tryptophan from indole and L-serine. The polypeptide is Tryptophan synthase beta chain (Shewanella baltica (strain OS185)).